The sequence spans 60 residues: Large ribosomal subunit protein uL30 (60 aa).

It belongs to the universal ribosomal protein uL30 family. Part of the 50S ribosomal subunit.

The chain is Large ribosomal subunit protein uL30 from Alcanivorax borkumensis (strain ATCC 700651 / DSM 11573 / NCIMB 13689 / SK2).